Reading from the N-terminus, the 448-residue chain is DEAD-box ATP-dependent RNA helicase CshB (448 aa).

The Q motif signature appears at 4 to 32 (HPFEQFNLESSLIDAVKDLNFEKPTEIQN). The Helicase ATP-binding domain maps to 35–206 (IPRILKRTNL…NKYLSHPEYV (172 aa)). 48–55 (SQTGTGKS) is an ATP binding site. A DEAD box motif is present at residues 154 to 157 (DEAD). One can recognise a Helicase C-terminal domain in the interval 236–386 (NLIDILNPYL…EVKAHNQRQA (151 aa)). The segment covering 400 to 418 (NKVRSKIKNKVKPGYKKKF) has biased composition (basic residues). Residues 400 to 448 (NKVRSKIKNKVKPGYKKKFKQEVEKMKRQERKQFSKQQNRQKRKQNKKG) form a disordered region. The segment covering 419–432 (KQEVEKMKRQERKQ) has biased composition (basic and acidic residues). Basic residues predominate over residues 438-448 (NRQKRKQNKKG).

The protein belongs to the DEAD box helicase family. CshB subfamily.

Its subcellular location is the cytoplasm. It catalyses the reaction ATP + H2O = ADP + phosphate + H(+). Probable DEAD-box RNA helicase. May work in conjunction with the cold shock proteins to ensure proper initiation of transcription at low and optimal temperatures. The sequence is that of DEAD-box ATP-dependent RNA helicase CshB from Staphylococcus aureus (strain NCTC 8325 / PS 47).